Here is a 396-residue protein sequence, read N- to C-terminus: Enoyl-[acyl-carrier-protein] reductase [NADH] (396 aa).

Residues Gly-47–Phe-52, Phe-73–Glu-74, Asp-110–Ala-111, and Leu-138–Ala-139 each bind NAD(+). Tyr-224 is a binding site for substrate. The active-site Proton donor is the Tyr-234. NAD(+)-binding positions include Lys-243 and Leu-272–Thr-274.

It belongs to the TER reductase family. As to quaternary structure, monomer.

The enzyme catalyses a 2,3-saturated acyl-[ACP] + NAD(+) = a (2E)-enoyl-[ACP] + NADH + H(+). It participates in lipid metabolism; fatty acid biosynthesis. In terms of biological role, involved in the final reduction of the elongation cycle of fatty acid synthesis (FAS II). Catalyzes the reduction of a carbon-carbon double bond in an enoyl moiety that is covalently linked to an acyl carrier protein (ACP). The sequence is that of Enoyl-[acyl-carrier-protein] reductase [NADH] from Flavobacterium psychrophilum (strain ATCC 49511 / DSM 21280 / CIP 103535 / JIP02/86).